A 186-amino-acid polypeptide reads, in one-letter code: Ribosome-recycling factor (186 aa).

The protein belongs to the RRF family.

The protein resides in the cytoplasm. Responsible for the release of ribosomes from messenger RNA at the termination of protein biosynthesis. May increase the efficiency of translation by recycling ribosomes from one round of translation to another. The sequence is that of Ribosome-recycling factor from Chlorobaculum tepidum (strain ATCC 49652 / DSM 12025 / NBRC 103806 / TLS) (Chlorobium tepidum).